A 134-amino-acid polypeptide reads, in one-letter code: MAQKTRATAARKPRRKVNKNVTQGQAHIKSTFNNTIVSITDPSGAVLSWASAGGMGFKGSRKSTPFAAQQAAEAAAKGAQEHGMRKVDVFVKGPGSGRETAIRALQATGLEVGSIQDVTPSAHNGCRPPKRRRV.

Positions 1-22 (MAQKTRATAARKPRRKVNKNVT) are disordered. The segment covering 9–18 (AARKPRRKVN) has biased composition (basic residues).

Belongs to the universal ribosomal protein uS11 family. Part of the 30S ribosomal subunit. Interacts with proteins S7 and S18. Binds to IF-3.

Its function is as follows. Located on the platform of the 30S subunit, it bridges several disparate RNA helices of the 16S rRNA. Forms part of the Shine-Dalgarno cleft in the 70S ribosome. The polypeptide is Small ribosomal subunit protein uS11 (Kocuria rhizophila (strain ATCC 9341 / DSM 348 / NBRC 103217 / DC2201)).